Consider the following 257-residue polypeptide: Cyclin-C1-1 (257 aa).

It belongs to the cyclin family. Cyclin C subfamily.

The protein is Cyclin-C1-1 of Oryza sativa subsp. japonica (Rice).